A 508-amino-acid polypeptide reads, in one-letter code: Maturase K (508 aa).

The protein belongs to the intron maturase 2 family. MatK subfamily.

Its subcellular location is the plastid. The protein localises to the chloroplast. Functionally, usually encoded in the trnK tRNA gene intron. Probably assists in splicing its own and other chloroplast group II introns. In Amburana cearensis (Cerejeira), this protein is Maturase K.